A 242-amino-acid polypeptide reads, in one-letter code: Small ribosomal subunit protein uS2 (242 aa).

The protein belongs to the universal ribosomal protein uS2 family.

The polypeptide is Small ribosomal subunit protein uS2 (Neisseria meningitidis serogroup C (strain 053442)).